A 645-amino-acid chain; its full sequence is E3 ubiquitin-protein ligase ORTHRUS 2 (645 aa).

The segment at 12 to 63 (DGVCMRCKSNPPPEESLTCGTCVTPWHVSCLSSPPKTLASTLQWHCPDCSGE) adopts a PHD-type zinc-finger fold. Residues 96 to 133 (LSTEEKAKMRQRLLSGKGVEEDDEEEKRKKKGKGKNPN) are disordered. The RING-type 1 zinc finger occupies 146-185 (CSFCMQLPERPVTKPCGHNACLKCFEKWMGQGKRTCGKCR). One can recognise a YDG domain in the interval 273–422 (VRNQGLLVGE…FKVCRYLFVR (150 aa)). Residues 518–575 (CQICQQVLTLPVTTPCAHNFCKACLEAKFAGKTLVRERSTGGRTLRSRKNVLNCPCCP) form an RING-type 2 zinc finger. Residues 583–613 (QNPQVNREVAEVIEKLKTQEEDTAELEDEDE) adopt a coiled-coil conformation. Positions 599-645 (KTQEEDTAELEDEDEGECSGTTPEEDSEQPKKRIKLDTDATVSATIR) are disordered. The span at 603–625 (EDTAELEDEDEGECSGTTPEEDS) shows a compositional bias: acidic residues. Basic and acidic residues predominate over residues 626–636 (EQPKKRIKLDT).

In terms of assembly, interacts with histones CENH3, HTB2, HTR3 and H4. As to expression, mostly expressed in inflorescence and, to a lower extent, in leaves.

The protein localises to the nucleus. It carries out the reaction S-ubiquitinyl-[E2 ubiquitin-conjugating enzyme]-L-cysteine + [acceptor protein]-L-lysine = [E2 ubiquitin-conjugating enzyme]-L-cysteine + N(6)-ubiquitinyl-[acceptor protein]-L-lysine.. Its pathway is protein modification; protein ubiquitination. Functionally, E3 ubiquitin-protein ligase. Participates in CpG methylation-dependent transcriptional regulation and epigenetic transcriptional silencing. Mediates ubiquitination with the E2 ubiquitin-conjugating enzyme UBC11. Promotes methylation-mediated gene silencing leading, for example, to early flowering. Associates with methylated DNA, and can bind to CpG, CpNpG, and CpNpN DNA motifs, with a strong preference for methylated forms, and with highest affinity for CpG substrate. Probably acts at the DNA methylation?histone interface to maintain centromeric heterochromatin. The protein is E3 ubiquitin-protein ligase ORTHRUS 2 (ORTH2) of Arabidopsis thaliana (Mouse-ear cress).